We begin with the raw amino-acid sequence, 246 residues long: DNA repair protein RecO (246 aa).

Belongs to the RecO family.

Involved in DNA repair and RecF pathway recombination. In Alkaliphilus metalliredigens (strain QYMF), this protein is DNA repair protein RecO.